The sequence spans 207 residues: Large ribosomal subunit protein uL4 (207 aa).

Positions 44 to 77 (LRQGTHKTKGRSEVRGGGRKPWRQKGTGRARQGS) are disordered. Residues 60-71 (GGRKPWRQKGTG) are compositionally biased toward basic residues.

It belongs to the universal ribosomal protein uL4 family. As to quaternary structure, part of the 50S ribosomal subunit.

In terms of biological role, one of the primary rRNA binding proteins, this protein initially binds near the 5'-end of the 23S rRNA. It is important during the early stages of 50S assembly. It makes multiple contacts with different domains of the 23S rRNA in the assembled 50S subunit and ribosome. Functionally, forms part of the polypeptide exit tunnel. This is Large ribosomal subunit protein uL4 from Shouchella clausii (strain KSM-K16) (Alkalihalobacillus clausii).